Here is a 209-residue protein sequence, read N- to C-terminus: Pyridoxine/pyridoxamine 5'-phosphate oxidase (209 aa).

Substrate-binding positions include 2–5 (RVEY) and Lys-66. Residues 61–66 (RTVLCK), 76–77 (FT), Lys-83, and Gln-105 each bind FMN. The substrate site is built by Tyr-123, Arg-127, and Ser-131. FMN contacts are provided by residues 140–141 (QS) and Trp-186. 192–194 (RVH) provides a ligand contact to substrate. Arg-196 serves as a coordination point for FMN.

This sequence belongs to the pyridoxamine 5'-phosphate oxidase family. As to quaternary structure, homodimer. FMN serves as cofactor.

The catalysed reaction is pyridoxamine 5'-phosphate + O2 + H2O = pyridoxal 5'-phosphate + H2O2 + NH4(+). It carries out the reaction pyridoxine 5'-phosphate + O2 = pyridoxal 5'-phosphate + H2O2. Its pathway is cofactor metabolism; pyridoxal 5'-phosphate salvage; pyridoxal 5'-phosphate from pyridoxamine 5'-phosphate: step 1/1. The protein operates within cofactor metabolism; pyridoxal 5'-phosphate salvage; pyridoxal 5'-phosphate from pyridoxine 5'-phosphate: step 1/1. Its function is as follows. Catalyzes the oxidation of either pyridoxine 5'-phosphate (PNP) or pyridoxamine 5'-phosphate (PMP) into pyridoxal 5'-phosphate (PLP). In Mycobacterium sp. (strain JLS), this protein is Pyridoxine/pyridoxamine 5'-phosphate oxidase.